The sequence spans 100 residues: Movement protein TGBp3 (100 aa).

Residues 1–41 (MQTAPREYSTSGPTAVLAPTTNTQHYAPYSLYRFLSSHKLD) lie on the Lumenal side of the membrane. The chain crosses the membrane as a helical span at residues 42-59 (LLLGIALLVFLYVITAAP). Residues 60–100 (KEVCQVVITGESVVIRNCQQPDRILANLNLSPWNGVKFPLL) are Cytoplasmic-facing.

It belongs to the Tymovirales TGBp3 protein family.

Its subcellular location is the host endoplasmic reticulum membrane. In terms of biological role, plays a role in viral cell-to-cell propagation, by facilitating genome transport to neighboring plant cells through plasmosdesmata. May induce the formation of granular vesicles derived from the Endoplasmic reticulum, which align on actin filaments. In Narcissus mosaic virus (NMV), this protein is Movement protein TGBp3.